The primary structure comprises 457 residues: Serine--tRNA ligase (457 aa).

252–254 is an L-serine binding site; that stretch reads TAE. ATP-binding positions include 283–285 and Val-299; that span reads RKE. Glu-306 is a binding site for L-serine. ATP is bound at residue 370–373; that stretch reads EMVS. Thr-406 lines the L-serine pocket.

The protein belongs to the class-II aminoacyl-tRNA synthetase family. Type-1 seryl-tRNA synthetase subfamily. Homodimer. The tRNA molecule binds across the dimer.

It localises to the cytoplasm. The enzyme catalyses tRNA(Ser) + L-serine + ATP = L-seryl-tRNA(Ser) + AMP + diphosphate + H(+). It carries out the reaction tRNA(Sec) + L-serine + ATP = L-seryl-tRNA(Sec) + AMP + diphosphate + H(+). The protein operates within aminoacyl-tRNA biosynthesis; selenocysteinyl-tRNA(Sec) biosynthesis; L-seryl-tRNA(Sec) from L-serine and tRNA(Sec): step 1/1. Functionally, catalyzes the attachment of serine to tRNA(Ser). Is also able to aminoacylate tRNA(Sec) with serine, to form the misacylated tRNA L-seryl-tRNA(Sec), which will be further converted into selenocysteinyl-tRNA(Sec). The chain is Serine--tRNA ligase from Saccharolobus solfataricus (strain ATCC 35092 / DSM 1617 / JCM 11322 / P2) (Sulfolobus solfataricus).